The sequence spans 78 residues: Acyl carrier protein (78 aa).

The Carrier domain occupies 2-77; the sequence is SSIEERVKKI…QATSYVEANL (76 aa). At Ser37 the chain carries O-(pantetheine 4'-phosphoryl)serine.

The protein belongs to the acyl carrier protein (ACP) family. 4'-phosphopantetheine is transferred from CoA to a specific serine of apo-ACP by AcpS. This modification is essential for activity because fatty acids are bound in thioester linkage to the sulfhydryl of the prosthetic group.

The protein localises to the cytoplasm. Its pathway is lipid metabolism; fatty acid biosynthesis. Carrier of the growing fatty acid chain in fatty acid biosynthesis. This chain is Acyl carrier protein, found in Hydrogenovibrio crunogenus (strain DSM 25203 / XCL-2) (Thiomicrospira crunogena).